We begin with the raw amino-acid sequence, 345 residues long: 3-dehydroquinate synthase (345 aa).

NAD(+) contacts are provided by residues 62-67 (DGEEYK), 96-100 (GVISD), 120-121 (TT), K133, K142, and 160-163 (FLKT). Zn(2+)-binding residues include E175, H233, and H250.

The protein belongs to the sugar phosphate cyclases superfamily. Dehydroquinate synthase family. Co(2+) is required as a cofactor. Zn(2+) serves as cofactor. The cofactor is NAD(+).

It localises to the cytoplasm. It carries out the reaction 7-phospho-2-dehydro-3-deoxy-D-arabino-heptonate = 3-dehydroquinate + phosphate. It participates in metabolic intermediate biosynthesis; chorismate biosynthesis; chorismate from D-erythrose 4-phosphate and phosphoenolpyruvate: step 2/7. Catalyzes the conversion of 3-deoxy-D-arabino-heptulosonate 7-phosphate (DAHP) to dehydroquinate (DHQ). In Campylobacter concisus (strain 13826), this protein is 3-dehydroquinate synthase.